A 237-amino-acid polypeptide reads, in one-letter code: Protein FEV (237 aa).

The ETS DNA-binding region spans 47–127; the sequence is IQLWQFLLEL…HGKRYAYRFD (81 aa). The interval 129 to 237 is may mediate active transcriptional repression; it reads QGLAQACQPP…AASHLGGHYH (109 aa).

This sequence belongs to the ETS family. As to expression, expressed in central serotonergic neurons.

It localises to the nucleus. Functionally, functions as a transcriptional regulator. May function as a transcriptional repressor. Functions in the differentiation and the maintenance of the central serotonergic neurons. May play a role in cell growth. The sequence is that of Protein FEV (Fev) from Mus musculus (Mouse).